An 81-amino-acid chain; its full sequence is Small ribosomal subunit protein bS16 (81 aa).

It belongs to the bacterial ribosomal protein bS16 family.

The chain is Small ribosomal subunit protein bS16 from Lachnospira eligens (strain ATCC 27750 / DSM 3376 / VPI C15-48 / C15-B4) (Eubacterium eligens).